Here is a 75-residue protein sequence, read N- to C-terminus: ATP synthase subunit c (75 aa).

The next 2 helical transmembrane spans lie at 12–32 (LASIGYGLAAIGSAIGVGIVV) and 49–69 (LTVLMYVGVAFTEALALIGIG).

The protein belongs to the ATPase C chain family. In terms of assembly, F-type ATPases have 2 components, F(1) - the catalytic core - and F(0) - the membrane proton channel. F(1) has five subunits: alpha(3), beta(3), gamma(1), delta(1), epsilon(1). F(0) has three main subunits: a(1), b(2) and c(10-14). The alpha and beta chains form an alternating ring which encloses part of the gamma chain. F(1) is attached to F(0) by a central stalk formed by the gamma and epsilon chains, while a peripheral stalk is formed by the delta and b chains.

The protein resides in the cell membrane. In terms of biological role, f(1)F(0) ATP synthase produces ATP from ADP in the presence of a proton or sodium gradient. F-type ATPases consist of two structural domains, F(1) containing the extramembraneous catalytic core and F(0) containing the membrane proton channel, linked together by a central stalk and a peripheral stalk. During catalysis, ATP synthesis in the catalytic domain of F(1) is coupled via a rotary mechanism of the central stalk subunits to proton translocation. Functionally, key component of the F(0) channel; it plays a direct role in translocation across the membrane. A homomeric c-ring of between 10-14 subunits forms the central stalk rotor element with the F(1) delta and epsilon subunits. The polypeptide is ATP synthase subunit c (Tropheryma whipplei (strain TW08/27) (Whipple's bacillus)).